Consider the following 220-residue polypeptide: Putative O-methyltransferase Mjls_4009 (220 aa).

S-adenosyl-L-methionine is bound by residues Val47, Glu69, 71-72 (GT), Ser77, Asp95, and Val96. Substrate is bound at residue Asp143. Asp145 serves as a coordination point for S-adenosyl-L-methionine.

Belongs to the class I-like SAM-binding methyltransferase superfamily. Cation-dependent O-methyltransferase family.

The protein is Putative O-methyltransferase Mjls_4009 of Mycobacterium sp. (strain JLS).